The primary structure comprises 190 residues: uncharacterized protein (190 aa).

Residues 1 to 21 form a helical membrane-spanning segment; the sequence is MLVMSITFSFVAVALLVYFYV. The segment covering 103–114 has biased composition (basic and acidic residues); sequence REEVCARPEHRS. The disordered stretch occupies residues 103-130; it reads REEVCARPEHRSAPSRAGSSAAKPTPTK.

This sequence to B.burgdorferi BB0265.

It localises to the membrane. This is an uncharacterized protein from Treponema pallidum (strain Nichols).